A 457-amino-acid chain; its full sequence is Transcription termination factor Rho (457 aa).

The segment at 1 to 23 (MNTTNKQLTEELNNTESNNDHND) is disordered. The 76-residue stretch at 77 to 152 (LIVGEGVLEV…LKVNRVNFED (76 aa)) folds into the Rho RNA-BD domain. Residues 200–205 (GKGQRA), 212–217 (RTGKTV), and Arg243 each bind ATP.

The protein belongs to the Rho family. Homohexamer. The homohexamer assembles into an open ring structure.

Functionally, facilitates transcription termination by a mechanism that involves Rho binding to the nascent RNA, activation of Rho's RNA-dependent ATPase activity, and release of the mRNA from the DNA template. The polypeptide is Transcription termination factor Rho (Rickettsia prowazekii (strain Madrid E)).